The chain runs to 410 residues: Formyl-CoA:oxalate CoA-transferase (410 aa).

CoA-binding positions include 18–19 (QS), 72–75 (LNTK), 96–98 (NFG), arginine 104, and 136–139 (KAYE). Aspartate 168 serves as the catalytic Nucleophile. The interval 221 to 245 (PLAEYPNEDFGDEVPRSGNASGGGQ) is disordered. 243 to 245 (GGQ) contributes to the substrate binding site.

This sequence belongs to the CoA-transferase III family. Frc subfamily. As to quaternary structure, homodimer.

The enzyme catalyses formyl-CoA + oxalate = oxalyl-CoA + formate. Its pathway is metabolic intermediate degradation; oxalate degradation; CO(2) and formate from oxalate: step 1/2. In terms of biological role, involved in the catabolism of oxalate and in the adapatation to low pH via the induction of the oxalate-dependent acid tolerance response (ATR). Catalyzes the transfer of the CoA moiety from formyl-CoA to oxalate. This is Formyl-CoA:oxalate CoA-transferase from Streptomyces coelicolor (strain ATCC BAA-471 / A3(2) / M145).